The following is an 89-amino-acid chain: Small ribosomal subunit protein bS20 (89 aa).

The protein belongs to the bacterial ribosomal protein bS20 family.

Functionally, binds directly to 16S ribosomal RNA. This Sulfurovum sp. (strain NBC37-1) protein is Small ribosomal subunit protein bS20.